The primary structure comprises 86 residues: Large ribosomal subunit protein bL27 (86 aa).

A disordered region spans residues 1 to 22 (MATKKAGGSSRNGRDSAGRRLG).

The protein belongs to the bacterial ribosomal protein bL27 family.

The protein is Large ribosomal subunit protein bL27 of Rickettsia rickettsii (strain Iowa).